Reading from the N-terminus, the 346-residue chain is tRNA pseudouridine synthase D (346 aa).

The active-site Nucleophile is D81. Residues 157-303 form the TRUD domain; the sequence is GVPNYFGLQR…MKHERRILRL (147 aa).

It belongs to the pseudouridine synthase TruD family.

The enzyme catalyses uridine(13) in tRNA = pseudouridine(13) in tRNA. In terms of biological role, responsible for synthesis of pseudouridine from uracil-13 in transfer RNAs. The sequence is that of tRNA pseudouridine synthase D from Stutzerimonas stutzeri (strain A1501) (Pseudomonas stutzeri).